The primary structure comprises 76 residues: MFTKALSVVLLTCALFSGQLMAGHKGHEFVWVKNVDHQLRHEADSDELRAVAEESAEGLREHFYWQKSRKPEAGQR.

The N-terminal stretch at Met1–Ala22 is a signal peptide.

This is an uncharacterized protein from Escherichia coli O157:H7.